Here is a 229-residue protein sequence, read N- to C-terminus: Artemin (229 aa).

N-acetylalanine is present on A1. One can recognise a Ferritin-like diiron domain in the interval 25–173; the sequence is HNFDPECEKA…DCLSNLHCIG (149 aa).

This sequence belongs to the ferritin family.

The protein is Artemin of Artemia salina (Brine shrimp).